Consider the following 580-residue polypeptide: Cyclin-K (580 aa).

The tract at residues 262 to 580 (KQQMPHHTPH…GGLGRAAWMR (319 aa)) is disordered. Composition is skewed to low complexity over residues 263 to 277 (QQMP…QQPP) and 285 to 321 (VPQV…QQPK). Residues serine 324, serine 328, serine 329, and serine 340 each carry the phosphoserine modification. Positions 377–386 (PLAAALGEAE) are enriched in low complexity. Positions 400-426 (QIPPPAHPAPVHQPPPLPHRPPPPPPS) are enriched in pro residues. The segment covering 427 to 444 (SYMTGMSTTSSYMSGEGY) has biased composition (low complexity). Over residues 477 to 568 (VYPPNPPPPP…PPPIPPPGMP (92 aa)) the composition is skewed to pro residues.

This sequence belongs to the cyclin family. Cyclin C subfamily. As to quaternary structure, regulatory subunit of cyclin-dependent kinases. Identified in a complex with a kinase and the RNA polymerase II holoenzyme. Interacts with POLR2A. Interacts with CDK12 and CDK13. Interacts with CDK9 according to PubMed:10574912; does not interact with CDK9 according to PubMed:22012619. (Microbial infection) Interacts with human herpes virus 1 (HHV-1) transcriptional regulator ICP22. Widely expressed. Highest levels in testis.

Its subcellular location is the nucleus. Regulatory subunit of cyclin-dependent kinases that mediates activation of target kinases. Plays a role in transcriptional regulation via its role in regulating the phosphorylation of the C-terminal domain (CTD) of the large subunit of RNA polymerase II (POLR2A). The sequence is that of Cyclin-K (CCNK) from Homo sapiens (Human).